Here is a 499-residue protein sequence, read N- to C-terminus: Probable cytosol aminopeptidase (499 aa).

Positions 268 and 273 each coordinate Mn(2+). The active site involves K280. 3 residues coordinate Mn(2+): D291, D350, and E352. Residue R354 is part of the active site.

Belongs to the peptidase M17 family. It depends on Mn(2+) as a cofactor.

The protein localises to the cytoplasm. It carries out the reaction Release of an N-terminal amino acid, Xaa-|-Yaa-, in which Xaa is preferably Leu, but may be other amino acids including Pro although not Arg or Lys, and Yaa may be Pro. Amino acid amides and methyl esters are also readily hydrolyzed, but rates on arylamides are exceedingly low.. The catalysed reaction is Release of an N-terminal amino acid, preferentially leucine, but not glutamic or aspartic acids.. Presumably involved in the processing and regular turnover of intracellular proteins. Catalyzes the removal of unsubstituted N-terminal amino acids from various peptides. In Halorhodospira halophila (strain DSM 244 / SL1) (Ectothiorhodospira halophila (strain DSM 244 / SL1)), this protein is Probable cytosol aminopeptidase.